Consider the following 336-residue polypeptide: MTINRSRQPEDHEVARCRWLEPFLSHLQAARNVSPKTVTAYRCDLLQYFSFLKEQAGLDRLEAVEPERVEVADVRLFMGHLLDKGIQPRSIARKLASVKSFYRFLLETGRISSSPLSLVVTPRLDKKVPRFVSEEEARQLFRRFESQEDNAALQGDGKKAEVRQFETFRDRAVLEVLYGCGLRLSELIALERADVDLVHGFLKVTGKGRKQRIVPLGEPAVEALRKYFEVRRNFFRIPLERTGESSRVFVTSRGRQLYPMLVQRMTKRYLTPVSESEKKNPHILRHSFATHMLNGGADLKSVSEMLGHSSLTTTELYTHVTFSRLKEIYDKAHPGA.

Positions 14–106 (VARCRWLEPF…SVKSFYRFLL (93 aa)) constitute a Core-binding (CB) domain. Positions 127 to 330 (KVPRFVSEEE…TFSRLKEIYD (204 aa)) constitute a Tyr recombinase domain. Residues arginine 183, lysine 207, histidine 282, arginine 285, and histidine 308 contribute to the active site. Catalysis depends on tyrosine 317, which acts as the O-(3'-phospho-DNA)-tyrosine intermediate.

Belongs to the 'phage' integrase family. XerC subfamily. In terms of assembly, forms a cyclic heterotetrameric complex composed of two molecules of XerC and two molecules of XerD.

The protein resides in the cytoplasm. Its function is as follows. Site-specific tyrosine recombinase, which acts by catalyzing the cutting and rejoining of the recombining DNA molecules. The XerC-XerD complex is essential to convert dimers of the bacterial chromosome into monomers to permit their segregation at cell division. It also contributes to the segregational stability of plasmids. The sequence is that of Tyrosine recombinase XerC from Chlorobaculum parvum (strain DSM 263 / NCIMB 8327) (Chlorobium vibrioforme subsp. thiosulfatophilum).